Reading from the N-terminus, the 577-residue chain is Polyadenylate-binding protein, cytoplasmic and nuclear (577 aa).

The segment covering 1–10 (MADITDKTAE) has biased composition (basic and acidic residues). A disordered region spans residues 1-36 (MADITDKTAEQLENLNIQDDQKQAATGSESQSVENS). Ala-2 carries the post-translational modification N-acetylalanine. Lys-7 participates in a covalent cross-link: Glycyl lysine isopeptide (Lys-Gly) (interchain with G-Cter in ubiquitin). The interval 9 to 61 (AEQLENLNIQDDQKQAATGSESQSVENSSASLYVGDLEPSVSEAHLYDIFSPI) is required and sufficient for nuclear export. The span at 11–27 (QLENLNIQDDQKQAATG) shows a compositional bias: polar residues. Positions 12–17 (LENLNI) match the Nuclear export signal motif. 4 RRM domains span residues 38–116 (ASLY…WSQR), 126–203 (GNIF…PHLS), 219–296 (TNLY…RAQK), and 322–399 (VNLF…IAQR). Omega-N-methylarginine is present on Arg-107. Phosphoserine is present on Ser-249. Residues 281–317 (DSELNGEKLYVGRAQKKNERMHVLKKQYEAYRLEKMA) are required and sufficient for nuclear import. Ser-332 carries the phosphoserine modification. A Glycyl lysine isopeptide (Lys-Gly) (interchain with G-Cter in ubiquitin) cross-link involves residue Lys-337. Ser-405 bears the Phosphoserine mark. The interaction with SUP35 stretch occupies residues 473 to 577 (PPQFRNGPVY…KEQEQQTEQA (105 aa)). A PABC domain is found at 489–568 (GFPRNANDNN…ASAAYESFKK (80 aa)).

It belongs to the polyadenylate-binding protein type-1 family. Binds to poly(A) mRNA to form a periodic structure with a packing density of one molecule per 25 adenylate residues. Interacts with the nuclear export factor CRM1 and with the importin SXM1. Interacts with RNA15, a component of the cleavage factor IA (CFIA) complex. Interacts with translation initiation factor eIF4G (TIF4631 or TIF4632) and release factor eRF3 (SUP35). Interacts with the PAB-dependent poly(A)-nuclease (PAN) complex regulatory subunit PAN3. Interacts with ARF1, DCP1, PBP1, the Hsp70 chaperone SSA1, and TPA1. Interacts with PAT1 in an RNA-dependent manner.

The protein resides in the cytoplasm. It is found in the nucleus. Functionally, binds the poly(A) tail of mRNA. Appears to be an important mediator of the multiple roles of the poly(A) tail in mRNA biogenesis, stability and translation. In the nucleus, interacts with the nuclear cleavage factor IA (CFIA), which is required for both mRNA cleavage and polyadenylation. Is also required for efficient mRNA export to the cytoplasm. Acts in concert with a poly(A)-specific nuclease (PAN) to affect poly(A) tail shortening, which may occur concomitantly with either nucleocytoplasmic mRNA transport or translational initiation. Regulates PAN activity via interaction with the stimulator PAN3 or the inhibitor PBP1. In the cytoplasm, affects both translation and mRNA decay. Stimulates translation by interaction with translation initiation factor eIF4G, a subunit of the cap-binding complex eIF4F, bringing the 5'- and 3'-ends of the mRNA in proximity. The formation of this circular mRNP structure appears to be critical for the synergistic effects of the cap and the poly(A) tail in facilitating translation initiation, recycling of ribosomes, and mRNA stability. Also regulates translation termination by recruiting eukaryotic release factor 3 (eRF3). Interaction with eRF3 is also required for regulation of normal mRNA decay through translation termination-coupled poly(A) shortening, probably mediated by PAN. Loss of PAB1 from the mRNP after deadenylation triggers mRNA degradation. Inhibits the major cytoplasmic mRNA deadenylase CCR4-NOT complex. Is also associated peripherally with COPI vesicles through its interaction with ARF1, and this is required for correct localization of the asymmetrically distributed ASH1 mRNA. The sequence is that of Polyadenylate-binding protein, cytoplasmic and nuclear (PAB1) from Saccharomyces cerevisiae (strain ATCC 204508 / S288c) (Baker's yeast).